The chain runs to 230 residues: Large ribosomal subunit protein uL1 (230 aa).

This sequence belongs to the universal ribosomal protein uL1 family. Part of the 50S ribosomal subunit.

Its function is as follows. Binds directly to 23S rRNA. The L1 stalk is quite mobile in the ribosome, and is involved in E site tRNA release. In terms of biological role, protein L1 is also a translational repressor protein, it controls the translation of the L11 operon by binding to its mRNA. The protein is Large ribosomal subunit protein uL1 of Chromohalobacter salexigens (strain ATCC BAA-138 / DSM 3043 / CIP 106854 / NCIMB 13768 / 1H11).